A 3120-amino-acid polypeptide reads, in one-letter code: DNA-directed RNA polymerase subunit beta'' (3120 aa).

Residues Cys323, Cys396, Cys403, and Cys406 each coordinate Zn(2+). Residues 595-1130 are insert-1; that stretch reads FIGEGKQNVL…LKTLVLKKWF (536 aa). Residues 1796 to 2346 are insert-2; the sequence is KGHLVAYARP…NGIIQAKSLL (551 aa). The insert-3 stretch occupies residues 2422 to 2610; it reads NSNFLENTHF…PEGEGEKDMT (189 aa). The insert-4 stretch occupies residues 2726-2801; sequence FSKKRWKKSI…KQNQTIILAL (76 aa). The insert-5 stretch occupies residues 2856–2996; sequence ASKMSEYMFS…LNQLLSNNLD (141 aa). The segment at 2926 to 2956 is disordered; the sequence is EGIDSSKIPSSNIPEGKVTQNNKRKSTRKNV. Residues 2932–2946 are compositionally biased toward polar residues; the sequence is KIPSSNIPEGKVTQN.

The protein belongs to the RNA polymerase beta' chain family. RpoC2 subfamily. In plastids the minimal PEP RNA polymerase catalytic core is composed of four subunits: alpha, beta, beta', and beta''. When a (nuclear-encoded) sigma factor is associated with the core the holoenzyme is formed, which can initiate transcription. The cofactor is Zn(2+).

It is found in the plastid. It localises to the chloroplast. It catalyses the reaction RNA(n) + a ribonucleoside 5'-triphosphate = RNA(n+1) + diphosphate. Its function is as follows. DNA-dependent RNA polymerase catalyzes the transcription of DNA into RNA using the four ribonucleoside triphosphates as substrates. The sequence is that of DNA-directed RNA polymerase subunit beta'' from Chlamydomonas reinhardtii (Chlamydomonas smithii).